The primary structure comprises 493 residues: Probable malate:quinone oxidoreductase (493 aa).

This sequence belongs to the MQO family. FAD serves as cofactor.

It catalyses the reaction (S)-malate + a quinone = a quinol + oxaloacetate. It functions in the pathway carbohydrate metabolism; tricarboxylic acid cycle; oxaloacetate from (S)-malate (quinone route): step 1/1. This is Probable malate:quinone oxidoreductase from Mycobacterium marinum (strain ATCC BAA-535 / M).